The primary structure comprises 228 residues: HTH-type transcriptional activator FasR (228 aa).

Residues 1-39 (MSDLAKTAQRRALRSSGSARPDEDVPAPNRRGNRLPRDE) form a disordered region. The region spanning 38-98 (DERRGQLLVV…AVLHRHVENL (61 aa)) is the HTH tetR-type domain. Positions 61-80 (GMDEIADRAGVSKPVLYQHF) form a DNA-binding region, H-T-H motif.

Homodimer.

With respect to regulation, fasR:DNA binding is regulated by long-chain acyl-CoAs (C14- to C26-CoA), which act as effector molecules that modulate the affinity of FasR for its DNA binding sequences and therefore modulate the expression of the essential fas-acpS operon. FasR activity is not affected by mycolic acid biosynthesis intermediates. Functionally, transcriptional activator that plays a central role in sensing mycobacterial long-chain fatty acids and regulating lipid biosynthesis. Activates the expression of the genes encoding the fatty acid synthase (fas) and the 4-phosphopantetheinyl transferase (acpS), whose products are involved in the fatty acid and mycolic acid biosynthesis. Specifically binds to three conserved operator sequences present in the fas-acpS promoter region. Not essential for M.tuberculosis viability, although it is required for the optimal growth in vitro and for virulence in macrophages and in a mouse model of infection. This is HTH-type transcriptional activator FasR from Mycobacterium tuberculosis (strain ATCC 25618 / H37Rv).